The following is a 277-amino-acid chain: Elongation factor Ts (277 aa).

Residues 81–84 (TDFV) form an involved in Mg(2+) ion dislocation from EF-Tu region.

The protein belongs to the EF-Ts family.

It is found in the cytoplasm. Functionally, associates with the EF-Tu.GDP complex and induces the exchange of GDP to GTP. It remains bound to the aminoacyl-tRNA.EF-Tu.GTP complex up to the GTP hydrolysis stage on the ribosome. The polypeptide is Elongation factor Ts (Amoebophilus asiaticus (strain 5a2)).